The primary structure comprises 804 residues: Phenylalanine--tRNA ligase beta subunit (804 aa).

The region spanning 38 to 148 (RAAFRAFTIA…ENAPVGTSFA (111 aa)) is the tRNA-binding domain. The B5 domain occupies 401–476 (HTARVIDFPV…RIHGINRIDP (76 aa)). Mg(2+) is bound by residues Asp-454, Asp-460, Glu-463, and Glu-464. The 94-residue stretch at 710–803 (SLFQSLKRDY…VAKQTGGVLR (94 aa)) folds into the FDX-ACB domain.

This sequence belongs to the phenylalanyl-tRNA synthetase beta subunit family. Type 1 subfamily. As to quaternary structure, tetramer of two alpha and two beta subunits. Requires Mg(2+) as cofactor.

It is found in the cytoplasm. The enzyme catalyses tRNA(Phe) + L-phenylalanine + ATP = L-phenylalanyl-tRNA(Phe) + AMP + diphosphate + H(+). The polypeptide is Phenylalanine--tRNA ligase beta subunit (Brucella suis biovar 1 (strain 1330)).